A 137-amino-acid polypeptide reads, in one-letter code: Cucumber peeling cupredoxin (137 aa).

Gln1 is modified (pyrrolidone carboxylic acid). The 105-residue stretch at 3–107 (TVHIVGDNTG…GQKLSINVVA (105 aa)) folds into the Phytocyanin domain. Cu cation-binding residues include His46, Cys89, His94, and Gln99. An intrachain disulfide couples Cys60 to Cys95. Residue Asn109 is glycosylated (N-linked (GlcNAc...) asparagine). Residues 112 to 137 (VSMPPPSSSPPSSVMPPPVMPPPSPS) form a disordered region. Pro residues predominate over residues 114 to 137 (MPPPSSSPPSSVMPPPVMPPPSPS). 4-hydroxyproline; partial is present on Pro115. 4-hydroxyproline is present on residues Pro116, Pro117, Pro121, and Pro122. Pro127 carries the 4-hydroxyproline; partial modification. Pro128, Pro129, Pro133, Pro134, and Pro136 each carry 4-hydroxyproline.

In Cucumis sativus (Cucumber), this protein is Cucumber peeling cupredoxin.